The sequence spans 245 residues: Lytic switch protein BZLF1 (245 aa).

The tract at residues 1 to 167 (MMDPNSTSED…RTRKPLQPES (167 aa)) is transactivation. Residues threonine 14 and threonine 159 each carry the phosphothreonine modification. A disordered region spans residues 140 to 167 (QLADIGAPQPAPAAAPARRTRKPLQPES). Positions 157–194 (RRTRKPLQPESLEECDSELDIKRYKNRVASRKCRAKFK) match the Bipartite nuclear localization signal motif. 3 positions are modified to phosphoserine: serine 167, serine 173, and serine 186. The basic motif stretch occupies residues 178–195 (KRYKNRVASRKCRAKFKH). A bZIP domain is found at 178–228 (KRYKNRVASRKCRAKFKHLLQHYREVASAKSSENDRLRLLLKQMCPSLDVD). Residues 196-228 (LLQHYREVASAKSSENDRLRLLLKQMCPSLDVD) form a leucine-zipper region. The interval 229–245 (SIIPRTPDVLHEDLLNF) is accessory activation domain.

This sequence belongs to the bZIP family. As to quaternary structure, homodimer. Interacts (via b-ZIP domain) with the DNA polymerase processivity factor BMRF1 (via N-terminus); this interaction may inhibit BZLF1-induced transcription of the BMRF1 promoter. Interacts with human UBN1, CRTC2 and RACK1. Interacts (via N-terminus) with human PAX5 (via N-terminus); this interaction inhibits BZLF1-mediated lytic viral reactivation. Interacts (via leucine-zipper domain) with host CEBPA; this interaction induces G1 host cell cycle arrest. Interacts (via C-terminus) with host TP53BP1 (via C-terminus); this interaction is involved in the activation of the viral lytic cycle. Interacts with host chromatin-remodeling ATPase INO80; this interaction participates to the activation of early lytic viral genes by BZLF1. Interacts with host regulator of chromatin SMARCA5/hSNF2H; this interaction participates to the activation of early lytic viral genes by BZLF1. Interacts with host PLSCR1/Phospholipid scramblase 1; this interaction negatively regulates the transcriptional regulatory activity of BZLF1 by preventing the formation of the BZLF1-CBP complex.

It is found in the host nucleus. Its function is as follows. Transcription factor that acts as a molecular switch to induce the transition from the latent to the lytic or productive phase of the virus cycle. Mediates the switch from the latent to the lytic cycle of infection in cells containing a highly methylated viral genome. Probably binds to silenced chromatin and recruits host chromatin-remodeling enzymes. Regulates this switch by binding to 2 types of ZEBRA response elements (ZREs): the CpG-free AP-1 like elements (latency) and the methylated CpG-containing elements (lytic replication). Activates preferentially the methylated forms of the viral lytic R (BRLF1) and Na (BRRF1) gene promoters, the latters being the first genes activated during Z-mediated reactivation in latently infected cells. BZLF1 and BRLF1 act together to trigger lytic replication. Also binds the lytic origin of replication, oriLyt. Induces G1 cell cycle arrest by stabilizing the host CCAAT/enhancer binding protein CEBPA. This function is important because the lytic cycle preferentially takes place in host cells arrested in G1. In Epstein-Barr virus (strain AG876) (HHV-4), this protein is Lytic switch protein BZLF1.